The following is a 237-amino-acid chain: Ribonuclease PH (237 aa).

Phosphate is bound by residues R86 and 124 to 126 (GTR).

This sequence belongs to the RNase PH family. In terms of assembly, homohexameric ring arranged as a trimer of dimers.

It catalyses the reaction tRNA(n+1) + phosphate = tRNA(n) + a ribonucleoside 5'-diphosphate. Its function is as follows. Phosphorolytic 3'-5' exoribonuclease that plays an important role in tRNA 3'-end maturation. Removes nucleotide residues following the 3'-CCA terminus of tRNAs; can also add nucleotides to the ends of RNA molecules by using nucleoside diphosphates as substrates, but this may not be physiologically important. Probably plays a role in initiation of 16S rRNA degradation (leading to ribosome degradation) during starvation. The sequence is that of Ribonuclease PH from Coxiella burnetii (strain RSA 331 / Henzerling II).